A 162-amino-acid polypeptide reads, in one-letter code: uncharacterized protein (162 aa).

A coiled-coil region spans residues 129–161; that stretch reads DLNAVLKNLKEVEKKSLKISKEELKKKLDQILG.

This is an uncharacterized protein from Aquifex aeolicus (strain VF5).